The chain runs to 1387 residues: Magnesium-chelatase subunit ChlH, chloroplastic (1387 aa).

The N-terminal 50 residues, 1–50 (MSSLVSTPFTTATGVQKKLGAPVPLHSFLLSRRQPAAGAGRGRAAAAAIR), are a transit peptide targeting the chloroplast.

Belongs to the Mg-chelatase subunit H family. As to quaternary structure, the magnesium chelatase complex is a heterotrimer consisting of subunits CHLI, CHLD and CHLH.

The protein resides in the plastid. The protein localises to the chloroplast stroma. It localises to the chloroplast membrane. The enzyme catalyses protoporphyrin IX + Mg(2+) + ATP + H2O = Mg-protoporphyrin IX + ADP + phosphate + 3 H(+). It functions in the pathway porphyrin-containing compound metabolism; chlorophyll biosynthesis. In terms of biological role, involved in chlorophyll biosynthesis. Catalyzes the insertion of magnesium ion into protoporphyrin IX to yield Mg-protoporphyrin IX. The reaction takes place in two steps, with an ATP-dependent activation followed by an ATP-dependent chelation step. May be involved in the plastid-to-nucleus retrograde signaling. The chain is Magnesium-chelatase subunit ChlH, chloroplastic (CHLH) from Oryza sativa subsp. indica (Rice).